We begin with the raw amino-acid sequence, 567 residues long: Glucose-6-phosphate isomerase, cytosolic A (567 aa).

D-glucose 6-phosphate is bound by residues 156 to 157 (GS), 212 to 217 (SKTFTT), Q356, E360, H391, and K516. E360 (proton donor) is an active-site residue. Active-site residues include H391 and K516.

This sequence belongs to the GPI family. As to quaternary structure, homodimer.

The protein localises to the cytoplasm. It carries out the reaction alpha-D-glucose 6-phosphate = beta-D-fructose 6-phosphate. It functions in the pathway carbohydrate degradation; glycolysis; D-glyceraldehyde 3-phosphate and glycerone phosphate from D-glucose: step 2/4. In terms of biological role, catalyzes the conversion of glucose-6-phosphate to fructose-6-phosphate, the second step in glycolysis, and the reverse reaction during gluconeogenesis. The protein is Glucose-6-phosphate isomerase, cytosolic A of Oryza sativa subsp. japonica (Rice).